Here is a 364-residue protein sequence, read N- to C-terminus: Protein-glutamate methylesterase/protein-glutamine glutaminase (364 aa).

Residues 5-123 (RVLVVDDTIL…PAANKAALAN (119 aa)) enclose the Response regulatory domain. Aspartate 56 carries the post-translational modification 4-aspartylphosphate. A CheB-type methylesterase domain is found at 174–364 (EIVVIGISTG…QEIVHTVKLY (191 aa)). Catalysis depends on residues serine 181, histidine 208, and aspartate 306.

Belongs to the CheB family. Post-translationally, phosphorylated by CheA. Phosphorylation of the N-terminal regulatory domain activates the methylesterase activity.

The protein localises to the cytoplasm. The catalysed reaction is [protein]-L-glutamate 5-O-methyl ester + H2O = L-glutamyl-[protein] + methanol + H(+). It carries out the reaction L-glutaminyl-[protein] + H2O = L-glutamyl-[protein] + NH4(+). In terms of biological role, involved in chemotaxis. Part of a chemotaxis signal transduction system that modulates chemotaxis in response to various stimuli. Catalyzes the demethylation of specific methylglutamate residues introduced into the chemoreceptors (methyl-accepting chemotaxis proteins or MCP) by CheR. Also mediates the irreversible deamidation of specific glutamine residues to glutamic acid. The protein is Protein-glutamate methylesterase/protein-glutamine glutaminase of Desulfotalea psychrophila (strain LSv54 / DSM 12343).